The following is a 60-amino-acid chain: MAVPARRTSKTRKRNRRGHIKLTTPGLAPCPNCGELRVSHRVCPSCGYYNGKQVIDVKAN.

The protein belongs to the bacterial ribosomal protein bL32 family.

This Pediococcus pentosaceus (strain ATCC 25745 / CCUG 21536 / LMG 10740 / 183-1w) protein is Large ribosomal subunit protein bL32.